The primary structure comprises 260 residues: Myb transcription factor 42 (260 aa).

2 HTH myb-type domains span residues 9–61 (KAHT…INYL) and 62–116 (RPDL…RRKL). 2 DNA-binding regions (H-T-H motif) span residues 37 to 61 (WRSL…INYL) and 89 to 112 (WSLI…NTHI).

As to expression, mainly expressed in the aerial parts and, to a lower extent, in roots.

The protein resides in the nucleus. Transcription factor that negatively regulates the expression of caffeic acid O-methyl-transferase genes (COMTs) and of other genes involved in the biosynthesis of lignin, thus preventing lignification. The chain is Myb transcription factor 42 from Zea mays (Maize).